The sequence spans 121 residues: MARIAGVDIPRDKRVVVSLTYIYGIGNTTAKKVLANVGVSEDVRVRDLTNEQTDAIRAEIDKLKVEGDLRREVNLNIKRLMEIGSYRGIRHRRGLPTRGQNTKNNARTRKGPTKTVAGKKK.

The tract at residues 90-121 (RHRRGLPTRGQNTKNNARTRKGPTKTVAGKKK) is disordered. The span at 106 to 121 (ARTRKGPTKTVAGKKK) shows a compositional bias: basic residues.

This sequence belongs to the universal ribosomal protein uS13 family. As to quaternary structure, part of the 30S ribosomal subunit. Forms a loose heterodimer with protein S19. Forms two bridges to the 50S subunit in the 70S ribosome.

Functionally, located at the top of the head of the 30S subunit, it contacts several helices of the 16S rRNA. In the 70S ribosome it contacts the 23S rRNA (bridge B1a) and protein L5 of the 50S subunit (bridge B1b), connecting the 2 subunits; these bridges are implicated in subunit movement. Contacts the tRNAs in the A and P-sites. The polypeptide is Small ribosomal subunit protein uS13 (Enterococcus faecalis (strain ATCC 700802 / V583)).